Here is a 471-residue protein sequence, read N- to C-terminus: G2/mitotic-specific cyclin-1 (471 aa).

It belongs to the cyclin family. Cyclin AB subfamily.

In terms of biological role, essential for the control of the cell cycle at the G2/M (mitosis) transition. Interacts with the CDC2 protein kinase to form MPF. G2/M cyclins accumulate steadily during G2 and are abruptly destroyed at mitosis. The polypeptide is G2/mitotic-specific cyclin-1 (CLB1) (Saccharomyces cerevisiae (strain ATCC 204508 / S288c) (Baker's yeast)).